The following is a 381-amino-acid chain: Prostatic acid phosphatase (381 aa).

Residues 1–31 form the signal peptide; sequence MRAVPLHLVGTASLTLGFLLLLSLRLDPGQA. Arginine 42 provides a ligand contact to substrate. The Nucleophile role is filled by histidine 43. Position 46 (arginine 46) interacts with substrate. An N-linked (GlcNAc...) asparagine glycan is attached at asparagine 93. Position 110 (arginine 110) interacts with substrate. 3 disulfide bridges follow: cysteine 160–cysteine 371, cysteine 214–cysteine 312, and cysteine 346–cysteine 350. Asparagine 219 is a glycosylation site (N-linked (GlcNAc...) asparagine). Histidine 288 provides a ligand contact to substrate. Aspartate 289 (proton donor) is an active-site residue. Asparagine 332 is a glycosylation site (N-linked (GlcNAc...) asparagine).

Belongs to the histidine acid phosphatase family. In terms of assembly, homodimer; dimer formation is required for phosphatase activity. Post-translationally, N-glycosylated. In terms of tissue distribution, expressed in prostate epithelium. Also expressed in the pelvic nerve and sacral spinal cord. Localizes in peptidergic and non-peptidergic nociceptive (pain-sensing) neurons.

The protein localises to the secreted. The protein resides in the cell membrane. It localises to the lysosome membrane. It carries out the reaction a phosphate monoester + H2O = an alcohol + phosphate. The enzyme catalyses a ribonucleoside 5'-phosphate + H2O = a ribonucleoside + phosphate. The catalysed reaction is 1-(9Z-octadecenoyl)-sn-glycero-3-phosphate + H2O = 1-(9Z-octadecenoyl)-sn-glycerol + phosphate. It catalyses the reaction O-phospho-L-tyrosyl-[protein] + H2O = L-tyrosyl-[protein] + phosphate. With respect to regulation, inhibited by L(+)-tartrate. Its function is as follows. A non-specific tyrosine phosphatase that dephosphorylates a diverse number of substrates under acidic conditions (pH 4-6) including alkyl, aryl, and acyl orthophosphate monoesters and phosphorylated proteins. Has lipid phosphatase activity and inactivates lysophosphatidic acid in seminal plasma. In addition to its tyrosine phosphatase activity, also has ecto-5'-nucleotidase activity in dorsal root ganglion (DRG) neurons. Generates adenosine from AMP. This extracellular adenosine leads to a decrease in chronic pain by activating A1R in nociceptive neurons. The protein is Prostatic acid phosphatase (Acp3) of Rattus norvegicus (Rat).